The following is a 417-amino-acid chain: Serine hydroxymethyltransferase (417 aa).

(6S)-5,6,7,8-tetrahydrofolate-binding positions include L121 and 125–127; that span reads GHL. At K229 the chain carries N6-(pyridoxal phosphate)lysine. (6S)-5,6,7,8-tetrahydrofolate is bound at residue 355–357; that stretch reads SPF.

The protein belongs to the SHMT family. As to quaternary structure, homodimer. Requires pyridoxal 5'-phosphate as cofactor.

The protein resides in the cytoplasm. It catalyses the reaction (6R)-5,10-methylene-5,6,7,8-tetrahydrofolate + glycine + H2O = (6S)-5,6,7,8-tetrahydrofolate + L-serine. It participates in one-carbon metabolism; tetrahydrofolate interconversion. It functions in the pathway amino-acid biosynthesis; glycine biosynthesis; glycine from L-serine: step 1/1. In terms of biological role, catalyzes the reversible interconversion of serine and glycine with tetrahydrofolate (THF) serving as the one-carbon carrier. This reaction serves as the major source of one-carbon groups required for the biosynthesis of purines, thymidylate, methionine, and other important biomolecules. Also exhibits THF-independent aldolase activity toward beta-hydroxyamino acids, producing glycine and aldehydes, via a retro-aldol mechanism. This chain is Serine hydroxymethyltransferase, found in Xanthomonas euvesicatoria pv. vesicatoria (strain 85-10) (Xanthomonas campestris pv. vesicatoria).